Consider the following 159-residue polypeptide: Phosphopantetheine adenylyltransferase (159 aa).

Substrate is bound at residue Thr-9. Residues 9-10 (TF) and His-17 each bind ATP. 3 residues coordinate substrate: Lys-41, Leu-73, and Arg-87. Residues 88–90 (GLR), Glu-98, and 123–129 (YAFLSST) each bind ATP.

This sequence belongs to the bacterial CoaD family. As to quaternary structure, homohexamer. Requires Mg(2+) as cofactor.

It is found in the cytoplasm. It carries out the reaction (R)-4'-phosphopantetheine + ATP + H(+) = 3'-dephospho-CoA + diphosphate. It participates in cofactor biosynthesis; coenzyme A biosynthesis; CoA from (R)-pantothenate: step 4/5. Functionally, reversibly transfers an adenylyl group from ATP to 4'-phosphopantetheine, yielding dephospho-CoA (dPCoA) and pyrophosphate. The sequence is that of Phosphopantetheine adenylyltransferase from Vibrio campbellii (strain ATCC BAA-1116).